The sequence spans 339 residues: UDP-glucose 4-epimerase (339 aa).

NAD(+) contacts are provided by residues 10 to 12 (GYI), 31 to 35 (DNLSN), 58 to 59 (DL), Phe-80, and Lys-84. 124-126 (SAT) contacts substrate. The Proton acceptor role is filled by Tyr-148. Residues Lys-152 and Tyr-176 each contribute to the NAD(+) site. Substrate-binding positions include 176–178 (YFN), 197–199 (NNL), Arg-230, and 291–294 (RPGD).

This sequence belongs to the NAD(P)-dependent epimerase/dehydratase family. The cofactor is NAD(+).

It carries out the reaction UDP-alpha-D-glucose = UDP-alpha-D-galactose. It catalyses the reaction UDP-N-acetyl-alpha-D-glucosamine = UDP-N-acetyl-alpha-D-galactosamine. It participates in cell wall biogenesis; teichoic acid biosynthesis. Functionally, catalyzes two distinct but analogous reactions: the reversible epimerization of UDP-glucose to UDP-galactose and the reversible epimerization of UDP-N-acetylglucosamine to UDP-N-acetylgalactosamine. The enzyme is more efficient in catalyzing the interconversion between unacetylated than between corresponding N-acetylated substrates. Essential for growth in media containing either glucose or galactose. May protect the cell from the toxic effects of galactose and glucose or derivatives of both sugars. Involved in the biosynthesis of teichoic acids via the formation of UDP-N-acetylgalactosamine. Influences cell division. The polypeptide is UDP-glucose 4-epimerase (Bacillus subtilis (strain 168)).